The sequence spans 245 residues: Ribosomal RNA small subunit methyltransferase G (245 aa).

S-adenosyl-L-methionine contacts are provided by residues glycine 85, phenylalanine 90, 108–110 (DST), 136–137 (AE), and arginine 155.

This sequence belongs to the methyltransferase superfamily. RNA methyltransferase RsmG family.

The protein localises to the cytoplasm. Specifically methylates the N7 position of a guanine in 16S rRNA. The polypeptide is Ribosomal RNA small subunit methyltransferase G (Nostoc sp. (strain PCC 7120 / SAG 25.82 / UTEX 2576)).